The chain runs to 1811 residues: ADP-ribosylation factor guanine nucleotide-exchange factor sec71 (1811 aa).

Disordered stretches follow at residues 1-108 and 316-336; these read MTDL…TSEA and INMNKSSSNGTPDRANSPIPS. Basic and acidic residues-rich tracts occupy residues 33–49, 57–73, and 80–91; these read STIKSRVSDEIDEHDSI, KSIEINDKNLEAEKDIE, and PPEDDLDSRSIE. The residue at position 40 (Ser40) is a Phosphoserine. Composition is skewed to polar residues over residues 92–108 and 316–326; these read SEQTGTLSKQTTSTSEA and INMNKSSSNGT. Thr326 carries the phosphothreonine modification. Ser332 and Ser353 each carry phosphoserine. The short motif at 533–537 is the HUS box element; that stretch reads NYDCI. A compositionally biased stretch (basic and acidic residues) spans 643 to 663; the sequence is TAKDDETESTSKGEEPQKSKS. The segment at 643-688 is disordered; it reads TAKDDETESTSKGEEPQKSKSEPPSAGINSTSMDNLESSGQALATD. Polar residues predominate over residues 669-688; sequence GINSTSMDNLESSGQALATD. In terms of domain architecture, SEC7 spans 692–880; the sequence is QFENLKHRKK…TEVYEEIQKN (189 aa). The residue at position 741 (Ser741) is a Phosphoserine. At Thr742 the chain carries Phosphothreonine. Residue Asp812 participates in Mg(2+) binding. The segment at 889–1103 is HDS1 domain; that stretch reads DPTSNFPEIP…TTKPLRKSLD (215 aa).

The protein resides in the cytoplasm. Its subcellular location is the golgi apparatus. It localises to the trans-Golgi network. It is found in the cytoplasmic vesicle. The protein localises to the COPI-coated vesicle membrane. The protein resides in the COPII-coated vesicle membrane. Functionally, guanine exchange factor that acts as an activator of arf1 at the trans-Golgi net-work and is thus involved in vesicular budding and traffic between compartments of the Golgi apparatus. Activation of Arf (ADP-ribosylation factor) GTPases is essential for vesicle formation via recruitment of cargo adapters and coat proteins necessary for Golgi trafficking. Involved in tunicamycin-induced ER stress response and subsequent apoptosis. This is ADP-ribosylation factor guanine nucleotide-exchange factor sec71 from Schizosaccharomyces pombe (strain 972 / ATCC 24843) (Fission yeast).